We begin with the raw amino-acid sequence, 428 residues long: Trigger factor (428 aa).

The region spanning 166-250 is the PPIase FKBP-type domain; that stretch reads GDIVTFDFKG…IKNIKEKILP (85 aa).

The protein belongs to the FKBP-type PPIase family. Tig subfamily.

The protein localises to the cytoplasm. The catalysed reaction is [protein]-peptidylproline (omega=180) = [protein]-peptidylproline (omega=0). In terms of biological role, involved in protein export. Acts as a chaperone by maintaining the newly synthesized protein in an open conformation. Functions as a peptidyl-prolyl cis-trans isomerase. The sequence is that of Trigger factor from Mycoplasma capricolum subsp. capricolum (strain California kid / ATCC 27343 / NCTC 10154).